A 144-amino-acid polypeptide reads, in one-letter code: Giant hemoglobin AIII chain (144 aa).

In terms of domain architecture, Globin spans 2-144 (ECGPLQRLKV…DVITGGIQGN (143 aa)). A heme b-binding site is contributed by His-95.

This sequence belongs to the globin family. Giant hemoglobin is composed of four heme-containing chains (AI to AIV), and two linker chains (AV and AVI).

The sequence is that of Giant hemoglobin AIII chain from Lamellibrachia sp. (Deep-sea giant tube worm).